Reading from the N-terminus, the 248-residue chain is 7-cyano-7-deazaguanine synthase (248 aa).

Residue 22-32 (LSGGLDSTTCL) participates in ATP binding. Zn(2+)-binding residues include cysteine 216, cysteine 225, cysteine 228, and cysteine 231.

This sequence belongs to the QueC family. It depends on Zn(2+) as a cofactor.

The catalysed reaction is 7-carboxy-7-deazaguanine + NH4(+) + ATP = 7-cyano-7-deazaguanine + ADP + phosphate + H2O + H(+). Its pathway is purine metabolism; 7-cyano-7-deazaguanine biosynthesis. In terms of biological role, catalyzes the ATP-dependent conversion of 7-carboxy-7-deazaguanine (CDG) to 7-cyano-7-deazaguanine (preQ(0)). This Leptospira biflexa serovar Patoc (strain Patoc 1 / Ames) protein is 7-cyano-7-deazaguanine synthase.